A 354-amino-acid polypeptide reads, in one-letter code: Guanine nucleotide-binding protein alpha-16 subunit (354 aa).

Gly2 carries the N-myristoyl glycine lipid modification. A lipid anchor (S-palmitoyl cysteine) is attached at Cys3. Positions 31-354 (KTVKLLLLGA…RDNLRTCGLY (324 aa)) constitute a G-alpha domain. The interval 34-47 (KLLLLGAGESGKST) is G1 motif. GTP-binding positions include 39–46 (GAGESGKS), 174–180 (LRTRIKT), 199–203 (DVGGQ), 268–271 (NKKD), and Ala326. 2 residues coordinate Mg(2+): Ser46 and Thr180. The interval 172–180 (DVLRTRIKT) is G2 motif. The interval 195–204 (FVVFDVGGQR) is G3 motif. The tract at residues 264 to 271 (ILFLNKKD) is G4 motif. The segment at 324 to 329 (TCATDT) is G5 motif.

Belongs to the G-alpha family. G proteins are composed of 3 units; alpha, beta and gamma. The alpha chain contains the guanine nucleotide binding site.

Its function is as follows. Guanine nucleotide-binding proteins (G proteins) are involved as modulators or transducers in various transmembrane signaling systems. In the 1-cell embryo, probably together with goa-1, controls nuclear rotation and spindle elongation during mitosis. During the first embryonic cell divisons, plays a role in gpr-1/2 cortical localization and in the proper orientation of EMS blastomere mitotic spindle. The protein is Guanine nucleotide-binding protein alpha-16 subunit (gpa-16) of Caenorhabditis briggsae.